Here is a 148-residue protein sequence, read N- to C-terminus: uncharacterized protein (148 aa).

Positions 1–18 (MKIILTVLAGVGLLSAGG) are cleaved as a signal peptide. A lipid anchor (N-palmitoyl cysteine) is attached at Cys19. Cys19 carries S-diacylglycerol cysteine lipidation.

The protein resides in the cell membrane. This is an uncharacterized protein from Bacillus subtilis (strain 168).